The sequence spans 320 residues: Bifunctional protein FolD 2 (320 aa).

NADP(+) is bound by residues 173–175 and isoleucine 242; that span reads GRS.

It belongs to the tetrahydrofolate dehydrogenase/cyclohydrolase family. Homodimer.

The catalysed reaction is (6R)-5,10-methylene-5,6,7,8-tetrahydrofolate + NADP(+) = (6R)-5,10-methenyltetrahydrofolate + NADPH. The enzyme catalyses (6R)-5,10-methenyltetrahydrofolate + H2O = (6R)-10-formyltetrahydrofolate + H(+). It participates in one-carbon metabolism; tetrahydrofolate interconversion. Catalyzes the oxidation of 5,10-methylenetetrahydrofolate to 5,10-methenyltetrahydrofolate and then the hydrolysis of 5,10-methenyltetrahydrofolate to 10-formyltetrahydrofolate. The polypeptide is Bifunctional protein FolD 2 (Rubrobacter xylanophilus (strain DSM 9941 / JCM 11954 / NBRC 16129 / PRD-1)).